The sequence spans 527 residues: Pyruvate kinase 1, cytosolic (527 aa).

Substrate is bound at residue R58. 4 residues coordinate K(+): D60, S62, D92, and T93. 60-63 (DFSW) contacts ATP. Position 256 (K256) interacts with substrate. E258 is a binding site for Mg(2+). Substrate is bound by residues G281, N282, and T313. N282 serves as a coordination point for Mg(2+).

This sequence belongs to the pyruvate kinase family. Homotetramer. Mg(2+) is required as a cofactor. Requires K(+) as cofactor.

The protein localises to the cytoplasm. It localises to the cytosol. The enzyme catalyses pyruvate + ATP = phosphoenolpyruvate + ADP + H(+). The protein operates within carbohydrate degradation; glycolysis; pyruvate from D-glyceraldehyde 3-phosphate: step 5/5. Functionally, key regulatory enzyme of the glycolytic pathway that catalyzes the final step of glycolysis, converting ADP and phosphoenolpyruvate (PEP) to ATP and pyruvate by essentially irreversible transphosphorylation. Is critical for plant growth and development. This Oryza sativa subsp. indica (Rice) protein is Pyruvate kinase 1, cytosolic.